We begin with the raw amino-acid sequence, 120 residues long: Flagellar transcriptional regulator FlhD (120 aa).

Belongs to the FlhD family. In terms of assembly, homodimer; disulfide-linked. Forms a heterohexamer composed of two FlhC and four FlhD subunits. Each FlhC binds a FlhD dimer, forming a heterotrimer, and a hexamer assembles by dimerization of two heterotrimers.

It localises to the cytoplasm. Its function is as follows. Functions in complex with FlhC as a master transcriptional regulator that regulates transcription of several flagellar and non-flagellar operons by binding to their promoter region. Activates expression of class 2 flagellar genes, including fliA, which is a flagellum-specific sigma factor that turns on the class 3 genes. Also regulates genes whose products function in a variety of physiological pathways. This Erwinia tasmaniensis (strain DSM 17950 / CFBP 7177 / CIP 109463 / NCPPB 4357 / Et1/99) protein is Flagellar transcriptional regulator FlhD.